The chain runs to 446 residues: Putative diacyglycerol O-acyltransferase Rv3371 (446 aa).

Residue histidine 129 is the Proton acceptor of the active site. The interval 425–446 (SRALPSAARRGRPSVPTARARH) is disordered.

It belongs to the long-chain O-acyltransferase family.

The catalysed reaction is an acyl-CoA + a 1,2-diacyl-sn-glycerol = a triacyl-sn-glycerol + CoA. It catalyses the reaction di-(9Z)-octadecenoylglycerol + (9Z)-octadecenoyl-CoA = 1,2,3-tri-(9Z-octadecenoyl)-glycerol + CoA. It participates in glycerolipid metabolism; triacylglycerol biosynthesis. Catalyzes the terminal and only committed step in triacylglycerol synthesis by using diacylglycerol and fatty acyl CoA as substrates. Required for storage lipid synthesis. In terms of biological role, upon expression in E.coli functions weakly as a triacylglycerol synthase, making triacylglycerol (TG) from diolein and long-chain fatty acyl-CoA. Has no wax synthase activity to produce wax esters. In Mycobacterium tuberculosis (strain ATCC 25618 / H37Rv), this protein is Putative diacyglycerol O-acyltransferase Rv3371.